A 77-amino-acid chain; its full sequence is MRQLFNKLKWTGAKAYFSYVSRGAAGGEEVASIDDVVEVGSGGVTISTGSGERYIPYHRIVEVRLATGEVLLDRRKR.

Belongs to the UPF0248 family.

This Pyrobaculum calidifontis (strain DSM 21063 / JCM 11548 / VA1) protein is UPF0248 protein Pcal_0252.